The primary structure comprises 1104 residues: Translation initiation factor IF-2 (1104 aa).

Disordered stretches follow at residues 51-444 (SLLG…LAAQ) and 461-497 (LARP…RRRA). Low complexity-rich tracts occupy residues 60 to 119 (AKPA…KPQA) and 127 to 164 (ATPK…AAKP). Positions 189–202 (APTPRPTPARPTPR) are enriched in pro residues. Low complexity-rich tracts occupy residues 203–215 (PAGA…PTPG), 227–246 (GAPS…KPGA), 311–336 (STTG…PAGM), and 366–396 (PTKA…SFRP). Positions 406–420 (GRPDWDDSARLDALR) are enriched in basic and acidic residues. Positions 481-495 (MRKRKKETARQRQRR) are enriched in basic residues. In terms of domain architecture, tr-type G spans 596 to 768 (RRPPVVTVMG…LLLVTEVEDL (173 aa)). The G1 stretch occupies residues 605–612 (GHVDHGKT). 605–612 (GHVDHGKT) serves as a coordination point for GTP. The interval 630 to 634 (GITQH) is G2. Residues 655–658 (DTPG) are G3. GTP-binding positions include 655-659 (DTPGH) and 709-712 (NKID). A G4 region spans residues 709–712 (NKID). A G5 region spans residues 745 to 747 (SAI).

Belongs to the TRAFAC class translation factor GTPase superfamily. Classic translation factor GTPase family. IF-2 subfamily.

It is found in the cytoplasm. Its function is as follows. One of the essential components for the initiation of protein synthesis. Protects formylmethionyl-tRNA from spontaneous hydrolysis and promotes its binding to the 30S ribosomal subunits. Also involved in the hydrolysis of GTP during the formation of the 70S ribosomal complex. This Synechococcus sp. (strain CC9605) protein is Translation initiation factor IF-2.